Here is a 243-residue protein sequence, read N- to C-terminus: Orotidine 5'-phosphate decarboxylase (243 aa).

Residues aspartate 16, lysine 38, 65–74 (DLKLHDIPNT), threonine 120, arginine 181, glutamine 190, glycine 210, and arginine 211 each bind substrate. Lysine 67 acts as the Proton donor in catalysis.

This sequence belongs to the OMP decarboxylase family. Type 1 subfamily. As to quaternary structure, homodimer.

The catalysed reaction is orotidine 5'-phosphate + H(+) = UMP + CO2. Its pathway is pyrimidine metabolism; UMP biosynthesis via de novo pathway; UMP from orotate: step 2/2. Its function is as follows. Catalyzes the decarboxylation of orotidine 5'-monophosphate (OMP) to uridine 5'-monophosphate (UMP). The protein is Orotidine 5'-phosphate decarboxylase of Bradyrhizobium sp. (strain BTAi1 / ATCC BAA-1182).